Reading from the N-terminus, the 199-residue chain is Mediator of RNA polymerase II transcription subunit 10 (199 aa).

It belongs to the Mediator complex subunit 10 family. In terms of assembly, component of the Mediator complex.

Its subcellular location is the nucleus. Functionally, component of the Mediator complex, a coactivator involved in the regulated transcription of nearly all RNA polymerase II-dependent genes. Mediator functions as a bridge to convey information from gene-specific regulatory proteins to the basal RNA polymerase II transcription machinery. Mediator is recruited to promoters by direct interactions with regulatory proteins and serves as a scaffold for the assembly of a functional preinitiation complex with RNA polymerase II and the general transcription factors. The protein is Mediator of RNA polymerase II transcription subunit 10 (NUT2) of Candida glabrata (strain ATCC 2001 / BCRC 20586 / JCM 3761 / NBRC 0622 / NRRL Y-65 / CBS 138) (Yeast).